Consider the following 459-residue polypeptide: 2-(3-amino-3-carboxypropyl)histidine synthase subunit 1 (459 aa).

Positions 1–68 (MEDDRAQVDL…AGANTSIEDS (68 aa)) are disordered. The segment covering 41–61 (SAAAGKSSSSSSNSTSQPAGA) has biased composition (low complexity). Residues Cys165, Cys268, and Cys403 each contribute to the [4Fe-4S] cluster site.

It belongs to the DPH1/DPH2 family. DPH1 subfamily. In terms of assembly, component of the 2-(3-amino-3-carboxypropyl)histidine synthase complex composed of dph-1, dph-2, dph-3 and a NADH-dependent reductase, predominantly cbr-1. [4Fe-4S] cluster serves as cofactor.

The protein localises to the cytoplasm. The catalysed reaction is L-histidyl-[translation elongation factor 2] + S-adenosyl-L-methionine = 2-[(3S)-amino-3-carboxypropyl]-L-histidyl-[translation elongation factor 2] + S-methyl-5'-thioadenosine + H(+). It participates in protein modification; peptidyl-diphthamide biosynthesis. In terms of biological role, catalyzes the first step of diphthamide biosynthesis, a post-translational modification of histidine which occurs in elongation factor 2. Dph-1 and dph-2 transfer a 3-amino-3-carboxypropyl (ACP) group from S-adenosyl-L-methionine (SAM) to a histidine residue, the reaction is assisted by a reduction system comprising dph-3 and a NADH-dependent reductase, predominantly cbr-1. The protein is 2-(3-amino-3-carboxypropyl)histidine synthase subunit 1 (dph-1) of Neurospora crassa (strain ATCC 24698 / 74-OR23-1A / CBS 708.71 / DSM 1257 / FGSC 987).